Here is a 294-residue protein sequence, read N- to C-terminus: N-acetylmuramic acid 6-phosphate etherase (294 aa).

Residues 56–219 (TSYSLKNGGR…STLSMVSVGK (164 aa)) enclose the SIS domain. The Proton donor role is filled by Glu-84. Residue Glu-115 is part of the active site.

Belongs to the GCKR-like family. MurNAc-6-P etherase subfamily. In terms of assembly, homodimer.

It catalyses the reaction N-acetyl-D-muramate 6-phosphate + H2O = N-acetyl-D-glucosamine 6-phosphate + (R)-lactate. It participates in amino-sugar metabolism; 1,6-anhydro-N-acetylmuramate degradation. The protein operates within amino-sugar metabolism; N-acetylmuramate degradation. Its pathway is cell wall biogenesis; peptidoglycan recycling. Specifically catalyzes the cleavage of the D-lactyl ether substituent of MurNAc 6-phosphate, producing GlcNAc 6-phosphate and D-lactate. Together with AnmK, is also required for the utilization of anhydro-N-acetylmuramic acid (anhMurNAc) either imported from the medium or derived from its own cell wall murein, and thus plays a role in cell wall recycling. The polypeptide is N-acetylmuramic acid 6-phosphate etherase (Francisella tularensis subsp. novicida (strain U112)).